A 123-amino-acid chain; its full sequence is Small ribosomal subunit protein uS12 (123 aa).

D89 carries the 3-methylthioaspartic acid modification.

This sequence belongs to the universal ribosomal protein uS12 family. In terms of assembly, part of the 30S ribosomal subunit. Contacts proteins S8 and S17. May interact with IF1 in the 30S initiation complex.

With S4 and S5 plays an important role in translational accuracy. Its function is as follows. Interacts with and stabilizes bases of the 16S rRNA that are involved in tRNA selection in the A site and with the mRNA backbone. Located at the interface of the 30S and 50S subunits, it traverses the body of the 30S subunit contacting proteins on the other side and probably holding the rRNA structure together. The combined cluster of proteins S8, S12 and S17 appears to hold together the shoulder and platform of the 30S subunit. This chain is Small ribosomal subunit protein uS12, found in Mesorhizobium japonicum (strain LMG 29417 / CECT 9101 / MAFF 303099) (Mesorhizobium loti (strain MAFF 303099)).